Consider the following 334-residue polypeptide: Holliday junction branch migration complex subunit RuvB (334 aa).

The segment at 4 to 184 is large ATPase domain (RuvB-L); that stretch reads ADRLISAAVI…FGIVQRLEFY (181 aa). Residues Ile23, Arg24, Gly65, Lys68, Thr69, Thr70, 131–133, Arg174, Tyr184, and Arg221 each bind ATP; that span reads EDY. Thr69 serves as a coordination point for Mg(2+). Positions 185-255 are small ATPAse domain (RuvB-S); it reads QVADLEHIVS…VAMKALDMLN (71 aa). The interval 258 to 334 is head domain (RuvB-H); sequence AEGFDFMDRK…YKHFGITREE (77 aa). DNA is bound by residues Arg294, Arg313, and Arg318.

Belongs to the RuvB family. As to quaternary structure, homohexamer. Forms an RuvA(8)-RuvB(12)-Holliday junction (HJ) complex. HJ DNA is sandwiched between 2 RuvA tetramers; dsDNA enters through RuvA and exits via RuvB. An RuvB hexamer assembles on each DNA strand where it exits the tetramer. Each RuvB hexamer is contacted by two RuvA subunits (via domain III) on 2 adjacent RuvB subunits; this complex drives branch migration. In the full resolvosome a probable DNA-RuvA(4)-RuvB(12)-RuvC(2) complex forms which resolves the HJ.

It is found in the cytoplasm. It catalyses the reaction ATP + H2O = ADP + phosphate + H(+). Its function is as follows. The RuvA-RuvB-RuvC complex processes Holliday junction (HJ) DNA during genetic recombination and DNA repair, while the RuvA-RuvB complex plays an important role in the rescue of blocked DNA replication forks via replication fork reversal (RFR). RuvA specifically binds to HJ cruciform DNA, conferring on it an open structure. The RuvB hexamer acts as an ATP-dependent pump, pulling dsDNA into and through the RuvAB complex. RuvB forms 2 homohexamers on either side of HJ DNA bound by 1 or 2 RuvA tetramers; 4 subunits per hexamer contact DNA at a time. Coordinated motions by a converter formed by DNA-disengaged RuvB subunits stimulates ATP hydrolysis and nucleotide exchange. Immobilization of the converter enables RuvB to convert the ATP-contained energy into a lever motion, pulling 2 nucleotides of DNA out of the RuvA tetramer per ATP hydrolyzed, thus driving DNA branch migration. The RuvB motors rotate together with the DNA substrate, which together with the progressing nucleotide cycle form the mechanistic basis for DNA recombination by continuous HJ branch migration. Branch migration allows RuvC to scan DNA until it finds its consensus sequence, where it cleaves and resolves cruciform DNA. This chain is Holliday junction branch migration complex subunit RuvB, found in Yersinia pseudotuberculosis serotype O:1b (strain IP 31758).